Reading from the N-terminus, the 361-residue chain is UDP-3-O-acylglucosamine N-acyltransferase (361 aa).

His-258 functions as the Proton acceptor in the catalytic mechanism.

The protein belongs to the transferase hexapeptide repeat family. LpxD subfamily. In terms of assembly, homotrimer.

It carries out the reaction a UDP-3-O-[(3R)-3-hydroxyacyl]-alpha-D-glucosamine + a (3R)-hydroxyacyl-[ACP] = a UDP-2-N,3-O-bis[(3R)-3-hydroxyacyl]-alpha-D-glucosamine + holo-[ACP] + H(+). It functions in the pathway bacterial outer membrane biogenesis; LPS lipid A biosynthesis. Functionally, catalyzes the N-acylation of UDP-3-O-acylglucosamine using 3-hydroxyacyl-ACP as the acyl donor. Is involved in the biosynthesis of lipid A, a phosphorylated glycolipid that anchors the lipopolysaccharide to the outer membrane of the cell. The protein is UDP-3-O-acylglucosamine N-acyltransferase of Nitrobacter hamburgensis (strain DSM 10229 / NCIMB 13809 / X14).